The primary structure comprises 256 residues: DNA repair protein RecO (256 aa).

The protein belongs to the RecO family.

Involved in DNA repair and RecF pathway recombination. The polypeptide is DNA repair protein RecO (Thiobacillus denitrificans (strain ATCC 25259 / T1)).